The chain runs to 233 residues: CDP-diacylglycerol--glycerol-3-phosphate 3-phosphatidyltransferase 2 (233 aa).

The segment at 1-23 (MGEEDTATVDQNSFGGGKDSLLR) is disordered. The next 5 membrane-spanning stretches (helical) occupy residues 40–60 (VITL…ILVA), 71–91 (TATT…GYIA), 100–120 (FGAF…LILL), 125–145 (MVAV…IAII), and 201–221 (LPSG…SLVV).

It belongs to the CDP-alcohol phosphatidyltransferase class-I family. It depends on Mn(2+) as a cofactor.

It is found in the microsome membrane. The protein resides in the endoplasmic reticulum membrane. The enzyme catalyses a CDP-1,2-diacyl-sn-glycerol + sn-glycerol 3-phosphate = a 1,2-diacyl-sn-glycero-3-phospho-(1'-sn-glycero-3'-phosphate) + CMP + H(+). The protein operates within phospholipid metabolism; phosphatidylglycerol biosynthesis; phosphatidylglycerol from CDP-diacylglycerol: step 1/2. Its function is as follows. Catalyzes the committed step to the synthesis of the acidic phospholipids, including phosphatidylglycerol (PG). Together with PGPS1, required for the proper embryo development by providing PG accurate levels. The polypeptide is CDP-diacylglycerol--glycerol-3-phosphate 3-phosphatidyltransferase 2 (Arabidopsis thaliana (Mouse-ear cress)).